Consider the following 147-residue polypeptide: Hemoglobin subunit beta (147 aa).

The 145-residue stretch at 3-147 folds into the Globin domain; the sequence is LLSAEENAHV…VANALAHKYH (145 aa). At threonine 13 the chain carries Phosphothreonine. At serine 45 the chain carries Phosphoserine. An N6-acetyllysine modification is found at lysine 60. Histidine 64 serves as a coordination point for heme b. Position 83 is an N6-acetyllysine (lysine 83). Histidine 93 is a heme b binding site. The residue at position 94 (cysteine 94) is an S-nitrosocysteine. An N6-acetyllysine modification is found at lysine 145.

This sequence belongs to the globin family. As to quaternary structure, heterotetramer of two alpha chains and two beta chains. As to expression, red blood cells.

Functionally, involved in oxygen transport from the lung to the various peripheral tissues. The polypeptide is Hemoglobin subunit beta (HBB) (Eulemur fulvus fulvus (Brown lemur)).